The primary structure comprises 132 residues: Small ribosomal subunit protein uS8 (132 aa).

This sequence belongs to the universal ribosomal protein uS8 family. Part of the 30S ribosomal subunit. Contacts proteins S5 and S12.

In terms of biological role, one of the primary rRNA binding proteins, it binds directly to 16S rRNA central domain where it helps coordinate assembly of the platform of the 30S subunit. In Streptococcus sanguinis (strain SK36), this protein is Small ribosomal subunit protein uS8.